A 315-amino-acid chain; its full sequence is tRNA-specific adenosine deaminase subunit tad3 (315 aa).

The CMP/dCMP-type deaminase domain occupies 158–299; sequence KRIESILEDL…AELNHRYLAY (142 aa). Histidine 211, cysteine 253, and cysteine 256 together coordinate Zn(2+).

This sequence belongs to the cytidine and deoxycytidylate deaminase family. ADAT3 subfamily. Heterodimer with Tad2.

Its subcellular location is the cytoplasm. The protein resides in the nucleus. Structural subunit of tRNA-specific adenosine deaminase, which deaminates adenosine-34 (the first, also called wobble position of the anticodon) to inosine in many tRNAs. Inosine-34 allows the decoding of 3 different nucleotides at the third position of mRNA codons, as inosine is able to pair with U, C, and A. The wobble inosine tRNA modification is essential for cell cycle progression in the G1/S and G2/M transitions in fission yeast. The polypeptide is tRNA-specific adenosine deaminase subunit tad3 (tad3) (Schizosaccharomyces pombe (strain 972 / ATCC 24843) (Fission yeast)).